We begin with the raw amino-acid sequence, 202 residues long: Pyridoxal 5'-phosphate synthase subunit PdxT (202 aa).

L-glutamine is bound at residue 49-51 (GES). Cys-81 acts as the Nucleophile in catalysis. Residues Arg-110 and 139 to 140 (IR) each bind L-glutamine. Active-site charge relay system residues include His-182 and Glu-184.

Belongs to the glutaminase PdxT/SNO family. As to quaternary structure, in the presence of PdxS, forms a dodecamer of heterodimers. Only shows activity in the heterodimer.

It catalyses the reaction aldehydo-D-ribose 5-phosphate + D-glyceraldehyde 3-phosphate + L-glutamine = pyridoxal 5'-phosphate + L-glutamate + phosphate + 3 H2O + H(+). The enzyme catalyses L-glutamine + H2O = L-glutamate + NH4(+). It functions in the pathway cofactor biosynthesis; pyridoxal 5'-phosphate biosynthesis. In terms of biological role, catalyzes the hydrolysis of glutamine to glutamate and ammonia as part of the biosynthesis of pyridoxal 5'-phosphate. The resulting ammonia molecule is channeled to the active site of PdxS. The chain is Pyridoxal 5'-phosphate synthase subunit PdxT from Rhodococcus opacus (strain B4).